Here is a 123-residue protein sequence, read N- to C-terminus: Small ribosomal subunit protein uS12 (123 aa).

Residues 1–28 (MPTIQQLIRTERSKVQKKTKSPALKQCP) are disordered. D89 carries the 3-methylthioaspartic acid modification. The tract at residues 104–123 (ATGVKDRKQGRSKYGTKRPK) is disordered. Positions 113 to 123 (GRSKYGTKRPK) are enriched in basic residues.

This sequence belongs to the universal ribosomal protein uS12 family. Part of the 30S ribosomal subunit. Contacts proteins S8 and S17. May interact with IF1 in the 30S initiation complex.

With S4 and S5 plays an important role in translational accuracy. In terms of biological role, interacts with and stabilizes bases of the 16S rRNA that are involved in tRNA selection in the A site and with the mRNA backbone. Located at the interface of the 30S and 50S subunits, it traverses the body of the 30S subunit contacting proteins on the other side and probably holding the rRNA structure together. The combined cluster of proteins S8, S12 and S17 appears to hold together the shoulder and platform of the 30S subunit. The polypeptide is Small ribosomal subunit protein uS12 (Gloeothece citriformis (strain PCC 7424) (Cyanothece sp. (strain PCC 7424))).